A 61-amino-acid chain; its full sequence is Large ribosomal subunit protein uL30 (61 aa).

This sequence belongs to the universal ribosomal protein uL30 family. As to quaternary structure, part of the 50S ribosomal subunit.

The sequence is that of Large ribosomal subunit protein uL30 from Chromobacterium violaceum (strain ATCC 12472 / DSM 30191 / JCM 1249 / CCUG 213 / NBRC 12614 / NCIMB 9131 / NCTC 9757 / MK).